Consider the following 462-residue polypeptide: Probable protein phosphatase 2C 1 (462 aa).

Residues serine 60–leucine 362 enclose the PPM-type phosphatase domain. Mn(2+)-binding residues include aspartate 95, glycine 96, aspartate 307, and aspartate 353. Disordered regions lie at residues glutamate 369–glutamate 394 and glutamate 421–valine 443. Residues glutamine 376–valine 385 are compositionally biased toward polar residues. Basic and acidic residues predominate over residues asparagine 424–glutamate 434.

It belongs to the PP2C family. In terms of assembly, interacts with GCN5. Mg(2+) serves as cofactor. It depends on Mn(2+) as a cofactor.

The catalysed reaction is O-phospho-L-seryl-[protein] + H2O = L-seryl-[protein] + phosphate. It carries out the reaction O-phospho-L-threonyl-[protein] + H2O = L-threonyl-[protein] + phosphate. May act as negative regulator of GCN5. The polypeptide is Probable protein phosphatase 2C 1 (PPC6-6) (Arabidopsis thaliana (Mouse-ear cress)).